The primary structure comprises 306 residues: Transcription initiation factor IIB (306 aa).

Repeat copies occupy residues 122–205 and 216–297.

Belongs to the TFIIB family.

Functionally, stabilizes TBP binding to an archaeal box-A promoter. Also responsible for recruiting RNA polymerase II to the pre-initiation complex (DNA-TBP-TFIIB). The protein is Transcription initiation factor IIB of Saccharolobus shibatae (strain ATCC 51178 / DSM 5389 / JCM 8931 / NBRC 15437 / B12) (Sulfolobus shibatae).